Here is a 546-residue protein sequence, read N- to C-terminus: Chaperonin GroEL (546 aa).

ATP is bound by residues 30-33, Lys-51, 87-91, Gly-415, and Asp-495; these read TLGP and DGTTT.

The protein belongs to the chaperonin (HSP60) family. In terms of assembly, forms a cylinder of 14 subunits composed of two heptameric rings stacked back-to-back. Interacts with the co-chaperonin GroES.

The protein localises to the cytoplasm. It catalyses the reaction ATP + H2O + a folded polypeptide = ADP + phosphate + an unfolded polypeptide.. In terms of biological role, together with its co-chaperonin GroES, plays an essential role in assisting protein folding. The GroEL-GroES system forms a nano-cage that allows encapsulation of the non-native substrate proteins and provides a physical environment optimized to promote and accelerate protein folding. This chain is Chaperonin GroEL, found in Brucella ovis (strain ATCC 25840 / 63/290 / NCTC 10512).